The sequence spans 1391 residues: DNA-directed RNA polymerase subunit beta (1391 aa).

This sequence belongs to the RNA polymerase beta chain family. The RNAP catalytic core consists of 2 alpha, 1 beta, 1 beta' and 1 omega subunit. When a sigma factor is associated with the core the holoenzyme is formed, which can initiate transcription.

The catalysed reaction is RNA(n) + a ribonucleoside 5'-triphosphate = RNA(n+1) + diphosphate. Functionally, DNA-dependent RNA polymerase catalyzes the transcription of DNA into RNA using the four ribonucleoside triphosphates as substrates. This is DNA-directed RNA polymerase subunit beta from Paramagnetospirillum magneticum (strain ATCC 700264 / AMB-1) (Magnetospirillum magneticum).